Consider the following 635-residue polypeptide: 1-deoxy-D-xylulose-5-phosphate synthase (635 aa).

Residues H74 and 115–117 each bind thiamine diphosphate; that span reads AHS. Mg(2+) is bound at residue D146. Residues 147–148, N176, Y283, and E365 contribute to the thiamine diphosphate site; that span reads GA. N176 is a binding site for Mg(2+).

Belongs to the transketolase family. DXPS subfamily. As to quaternary structure, homodimer. Mg(2+) serves as cofactor. Requires thiamine diphosphate as cofactor.

It catalyses the reaction D-glyceraldehyde 3-phosphate + pyruvate + H(+) = 1-deoxy-D-xylulose 5-phosphate + CO2. Its pathway is metabolic intermediate biosynthesis; 1-deoxy-D-xylulose 5-phosphate biosynthesis; 1-deoxy-D-xylulose 5-phosphate from D-glyceraldehyde 3-phosphate and pyruvate: step 1/1. Functionally, catalyzes the acyloin condensation reaction between C atoms 2 and 3 of pyruvate and glyceraldehyde 3-phosphate to yield 1-deoxy-D-xylulose-5-phosphate (DXP). In Polaromonas sp. (strain JS666 / ATCC BAA-500), this protein is 1-deoxy-D-xylulose-5-phosphate synthase.